The chain runs to 322 residues: PI-PLC X domain-containing protein 3 (322 aa).

Residues 22–197 (TLHGIPLTNL…EYQVLVFYHN (176 aa)) form the PI-PLC X-box domain. Catalysis depends on residues H37 and H114.

This chain is PI-PLC X domain-containing protein 3 (plcxd3), found in Danio rerio (Zebrafish).